The sequence spans 308 residues: Cyclopropane mycolic acid synthase 2 (308 aa).

S-adenosyl-L-methionine contacts are provided by residues 44–45 (YS), 79–87 (LLDIGCGWG), 105–110 (TLSANQ), and 137–138 (WE). The active site involves Cys-290.

It belongs to the CFA/CMAS family. In terms of assembly, homodimer.

The protein resides in the cytoplasm. The enzyme catalyses a 1-acyl-2-(9Z)-enoyl-sn-glycero-3-phospholipid + S-adenosyl-L-methionine = a 1-acyl-2-(9-cyclopronane)-acyl-sn-glycero-3-phospholipid + S-adenosyl-L-homocysteine + H(+). It functions in the pathway lipid metabolism; mycolic acid biosynthesis. Catalyzes the formation of trans cyclopropanated ketomycolate or methoxymycolate through the conversion of a double bond to a cyclopropane ring at the proximal position of an oxygenated mycolic acid via the transfer of a methylene group from S-adenosyl-L-methionine. In the absence of MmaA2, CmaA2 has a non-specific cis-cyclopropanating activity and is able to catalyze the conversion of a double bond to a cis cyclopropane ring at the distal position of an alpha mycolic acid. Cyclopropanated mycolic acids are key factors participating in cell envelope permeability, host immunomodulation and persistence. This is Cyclopropane mycolic acid synthase 2 (cmaA2) from Mycobacterium leprae (strain TN).